The primary structure comprises 372 residues: MRISRLLIRVLLGFVILFITYILFPSIPKALVNTLNVYKLEERLNYYNDRLLDGNLKSKELENATFVTLARNADLYDLIETINIYENRFNSKHNYPWVFLNDEPFTRTFEVVMSRLTSGPTYFGVVNSSEWDIPKWIDMDIAHSNWNRLSREGVLYGGMKSYRQMCRYFSGFFWRHPLLDPYKYYWRVEPSTKLLCEVNKDPFRQLRLLNKTYGFVITLFEIGQTVPSLWNSTLEFIEKYPETLAKNNLWEWISDDNGKKFSHCHFWSNFEIADLDFFRSDSYRKYFDFLDKKGGFFYERWGDAPVHSIALSLFLDRNKLHYFDEIGYSHAPLLHCPRKGRCFCKPEEIDLSSNSSCIARFINLTNEDYDEL.

Topologically, residues 1–6 are cytoplasmic; the sequence is MRISRL. The chain crosses the membrane as a helical; Signal-anchor for type II membrane protein span at residues 7 to 27; it reads LIRVLLGFVILFITYILFPSI. Residues 28-372 lie on the Lumenal side of the membrane; sequence PKALVNTLNV…NLTNEDYDEL (345 aa). Glu271 acts as the Nucleophile in catalysis.

The protein belongs to the glycosyltransferase 15 family.

Its subcellular location is the endoplasmic reticulum membrane. Its function is as follows. Probable mannosyltransferase involved in O-glycosylation of cell wall and secreted proteins. The sequence is that of O-glycoside alpha-1,2-mannosyltransferase homolog 2 (omh2) from Schizosaccharomyces pombe (strain 972 / ATCC 24843) (Fission yeast).